The following is a 901-amino-acid chain: DNA mismatch repair protein MutS (901 aa).

The segment covering 1–12 has biased composition (polar residues); that stretch reads MKYSASTSTPKS. Residues 1–25 form a disordered region; that stretch reads MKYSASTSTPKSAQPKEEELENSLP. An ATP-binding site is contributed by 679 to 686; the sequence is GPNASGKS.

It belongs to the DNA mismatch repair MutS family.

This protein is involved in the repair of mismatches in DNA. It is possible that it carries out the mismatch recognition step. This protein has a weak ATPase activity. This Trichodesmium erythraeum (strain IMS101) protein is DNA mismatch repair protein MutS.